We begin with the raw amino-acid sequence, 173 residues long: Crossover junction endodeoxyribonuclease RuvC (173 aa).

Residues aspartate 8, glutamate 67, and aspartate 139 contribute to the active site. Positions 8, 67, and 139 each coordinate Mg(2+).

The protein belongs to the RuvC family. As to quaternary structure, homodimer which binds Holliday junction (HJ) DNA. The HJ becomes 2-fold symmetrical on binding to RuvC with unstacked arms; it has a different conformation from HJ DNA in complex with RuvA. In the full resolvosome a probable DNA-RuvA(4)-RuvB(12)-RuvC(2) complex forms which resolves the HJ. Mg(2+) is required as a cofactor.

It is found in the cytoplasm. It carries out the reaction Endonucleolytic cleavage at a junction such as a reciprocal single-stranded crossover between two homologous DNA duplexes (Holliday junction).. In terms of biological role, the RuvA-RuvB-RuvC complex processes Holliday junction (HJ) DNA during genetic recombination and DNA repair. Endonuclease that resolves HJ intermediates. Cleaves cruciform DNA by making single-stranded nicks across the HJ at symmetrical positions within the homologous arms, yielding a 5'-phosphate and a 3'-hydroxyl group; requires a central core of homology in the junction. The consensus cleavage sequence is 5'-(A/T)TT(C/G)-3'. Cleavage occurs on the 3'-side of the TT dinucleotide at the point of strand exchange. HJ branch migration catalyzed by RuvA-RuvB allows RuvC to scan DNA until it finds its consensus sequence, where it cleaves and resolves the cruciform DNA. This chain is Crossover junction endodeoxyribonuclease RuvC, found in Aliivibrio fischeri (strain ATCC 700601 / ES114) (Vibrio fischeri).